The primary structure comprises 422 residues: Serine protease HTRA2, mitochondrial (422 aa).

The N-terminal 17 residues, 1–17 (MALRGSHRLEVIFKRCI), are a transit peptide targeting the mitochondrion. A propeptide spanning residues 18-74 (ASPVFHSHAANRRSSQLAIKGTDPSSNGNSGQDQQNGEQKAKGWRRLVRFFVPFSLG) is cleaved from the precursor. Over residues 29–55 (RRSSQLAIKGTDPSSNGNSGQDQQNGE) the composition is skewed to polar residues. The tract at residues 29–56 (RRSSQLAIKGTDPSSNGNSGQDQQNGEQ) is disordered. The helical transmembrane segment at 64-82 (LVRFFVPFSLGAAVSAAVI) threads the bilayer. 2 consecutive short sequence motifs (IAP-binding) follow at residues 75 to 78 (AAVS) and 94 to 97 (SKMT). A serine protease region spans residues 139–302 (SNGSGFIIEQ…IPIDYVKVFL (164 aa)). Catalysis depends on charge relay system residues histidine 157, aspartate 189, and serine 266. The PDZ domain maps to 325 to 410 (MGITMLTLTP…NLDIVILRGV (86 aa)).

It belongs to the peptidase S1C family. As to quaternary structure, interacts with th/DIAP1 (via BIR 2 domain).

The protein localises to the mitochondrion intermembrane space. The protein resides in the mitochondrion membrane. The catalysed reaction is Cleavage of non-polar aliphatic amino-acids at the P1 position, with a preference for Val, Ile and Met. At the P2 and P3 positions, Arg is selected most strongly with a secondary preference for other hydrophilic residues.. In terms of biological role, serine protease that shows proteolytic activity against a non-specific substrate beta-casein. Promotes or induces cell death either by direct binding to and inhibition of BIRC proteins (also called inhibitor of apoptosis proteins, IAPs), leading to an increase in caspase activity, or by a BIRC inhibition-independent, caspase-independent and serine protease activity-dependent mechanism. Can antagonize antiapoptotic activity of th/Diap1 by directly inducing the degradation of th/Diap1. The sequence is that of Serine protease HTRA2, mitochondrial from Drosophila yakuba (Fruit fly).